A 315-amino-acid chain; its full sequence is L-threo-3-deoxy-hexylosonate aldolase (315 aa).

Residue 50–51 (SN) participates in substrate binding. The active-site Schiff-base intermediate with substrate is lysine 174.

Belongs to the DapA family.

The enzyme catalyses 2-dehydro-3-deoxy-L-galactonate = L-glyceraldehyde + pyruvate. It participates in carbohydrate acid metabolism. In terms of biological role, mediates the conversion of 2-dehydro-3-deoxy-L-galactonate to pyruvate and L-glyceraldehyde in D-galacturonate catabolic process. The chain is L-threo-3-deoxy-hexylosonate aldolase (lga1) from Hypocrea jecorina (Trichoderma reesei).